The following is a 413-amino-acid chain: Probable tRNA pseudouridine synthase D (413 aa).

Residue D97 is the Nucleophile of the active site. Residues 167–370 (AAPNYYGYQR…YGTYRRVRLE (204 aa)) form the TRUD domain.

It belongs to the pseudouridine synthase TruD family.

The catalysed reaction is uridine(13) in tRNA = pseudouridine(13) in tRNA. In terms of biological role, could be responsible for synthesis of pseudouridine from uracil-13 in transfer RNAs. This chain is Probable tRNA pseudouridine synthase D, found in Pyrobaculum aerophilum (strain ATCC 51768 / DSM 7523 / JCM 9630 / CIP 104966 / NBRC 100827 / IM2).